Here is a 501-residue protein sequence, read N- to C-terminus: Nucleic-acid-binding protein from transposon X-element (501 aa).

Disordered regions lie at residues 20-71 (SSPQ…GNSN) and 105-128 (AAAK…SKPP). A CCHC-type zinc finger spans residues 285-302 (VQCHRCQQIGHTAKYCRK). Disordered regions lie at residues 353–385 (RPRS…SRGG) and 400–443 (QPMS…TDAS). The segment covering 407-422 (QQQKQKQQPYDGSPSR) has biased composition (low complexity). Over residues 434–443 (GTLQRSTDAS) the composition is skewed to polar residues.

The protein resides in the virion. Functionally, strongly basic protein that binds directly to retroviral RNA and may be involved in its packaging and in the reverse transcription process. This Drosophila melanogaster (Fruit fly) protein is Nucleic-acid-binding protein from transposon X-element.